Consider the following 219-residue polypeptide: Non-specific lipid transfer protein GPI-anchored 25 (219 aa).

Positions 1-22 are cleaved as a signal peptide; that stretch reads MATKITGVFILILTITFSSSSA. Disulfide bonds link Cys-39/Cys-85, Cys-49/Cys-68, Cys-69/Cys-110, and Cys-83/Cys-123. Asn-59 is a glycosylation site (N-linked (GlcNAc...) asparagine). Asn-148 carries N-linked (GlcNAc...) asparagine glycosylation. The tract at residues 152-181 is disordered; sequence SPQSVDLAPEVSPSSDLFSPETATLAPPPP. A lipid anchor (GPI-anchor amidated serine) is attached at Ser-192. The propeptide at 193-219 is removed in mature form; sequence SDSLKIRNFWFPSTIIMTFATSILARI.

The protein belongs to the plant LTP family.

The protein localises to the cell membrane. Its function is as follows. Probable lipid transfer protein. The sequence is that of Non-specific lipid transfer protein GPI-anchored 25 from Arabidopsis thaliana (Mouse-ear cress).